The sequence spans 506 residues: Maturase K (506 aa).

This sequence belongs to the intron maturase 2 family. MatK subfamily.

It localises to the plastid. The protein localises to the chloroplast. Its function is as follows. Usually encoded in the trnK tRNA gene intron. Probably assists in splicing its own and other chloroplast group II introns. The protein is Maturase K of Calluna vulgaris (Heather).